The primary structure comprises 99 residues: Bombyxin A-1 homolog (99 aa).

The first 19 residues, 1–19, serve as a signal peptide directing secretion; it reads MKTQVLFLVFALAAVMVSG. 3 disulfides stabilise this stretch: Cys-27-Cys-86, Cys-39-Cys-99, and Cys-85-Cys-90. Positions 48–76 are cleaved as a propeptide — c peptide like; that stretch reads TPYISPENEGYGWRWLEPQRARQLDGARG.

The protein belongs to the insulin family. Heterodimer of a B chain and an A chain linked by two disulfide bonds.

It is found in the secreted. In terms of biological role, brain peptide responsible for activation of prothoracic glands to produce ecdysone in insects. In Samia cynthia (Ailanthus silkmoth), this protein is Bombyxin A-1 homolog (SBXA1).